We begin with the raw amino-acid sequence, 419 residues long: Oligouridylate-binding protein 1B (419 aa).

RRM domains are found at residues 54-128 (RSVY…WAYA) and 139-217 (FNIF…WATK). Positions 217–257 (KGATSGEDKQSSDSKSVVELTSGVSEDGKDTTNGEAPENNA) are disordered. Ser241 is subject to Phosphoserine. The RRM 3 domain occupies 260-335 (TTVYVGNLAP…RQMKCSWGSK (76 aa)).

Interacts with UBA1A and UBA2A.

It is found in the nucleus. In terms of biological role, heterogeneous nuclear ribonucleoprotein (hnRNP)-like protein that acts as a component of the pre-mRNA processing machinery. Functions to facilitate the nuclear maturation of plant pre-mRNAs. The protein is Oligouridylate-binding protein 1B (UBP1B) of Arabidopsis thaliana (Mouse-ear cress).